The primary structure comprises 477 residues: MYGIKIYNTLTRKIEEFKPVSPGFVKMYVCGPTVYDYNHIGHGRVYVVYDALKRYLALRGYHVLHVMNITDIDDKIINRAHQEKRDWREIAETYTRDYLESLGKLNVKVDLHPRVTEHIKEIIEFIQILIDKGYAYVAPSGSVYFEVDKYPEYGELSGRTNKELWSQEKEFISEKKKPYDFALWKAWKPGEPHWDAPWGKGRPGWHIECSVMSSRYLGRQFDIHGGGTDLIFPHHENERAQSEAAFGVKPWVKYWVHTGMVMMGSEKMSKSLGNIIPLREAFKEWGPETLRLWYLTSHYRRPLVFTEESIRQAQKYYERLVSVTNTIKKLSREAVSLHRMNDEDLKILEKLLEIRSRFHEALSNDFNTPQALAVISEFMTLVFKEIQYNPKYMLVLTAYKLLREFNTVLGVLDKYLVETPEELETLLDNVINIVVDIRRELRERKLYDLADRIRSELGKHGIILMDRGKETTWMRRK.

A Zn(2+)-binding site is contributed by Cys-30. A 'HIGH' region motif is present at residues 32 to 42 (PTVYDYNHIGH). 3 residues coordinate Zn(2+): Cys-209, His-234, and Glu-238. A 'KMSKS' region motif is present at residues 267-271 (KMSKS). An ATP-binding site is contributed by Lys-270.

Belongs to the class-I aminoacyl-tRNA synthetase family. Requires Zn(2+) as cofactor.

The protein resides in the cytoplasm. The catalysed reaction is tRNA(Cys) + L-cysteine + ATP = L-cysteinyl-tRNA(Cys) + AMP + diphosphate. The chain is Cysteine--tRNA ligase from Staphylothermus marinus (strain ATCC 43588 / DSM 3639 / JCM 9404 / F1).